The following is an 897-amino-acid chain: DNA mismatch repair protein MutS (897 aa).

654–661 (GPNMAGKS) contacts ATP.

This sequence belongs to the DNA mismatch repair MutS family.

Its function is as follows. This protein is involved in the repair of mismatches in DNA. It is possible that it carries out the mismatch recognition step. This protein has a weak ATPase activity. This is DNA mismatch repair protein MutS from Maricaulis maris (strain MCS10) (Caulobacter maris).